The primary structure comprises 415 residues: MKGSYKSRWVIVIVVVIAAIAAFWFWQGRNDSQSAAPGATKQAQQSPAGGRRGMRAGPLAPVQAATAVEQAVPRYLTGLGTITAANTVTVRSRVDGQLMALHFQEGQQVKAGDLLAEIDPSQFKVALAQAQGQLAKDKATLANARRDLSRYQQLAKTNLVSRQELDAQQALVSETEGTIKADEASVASAQLQLDWSRITAPVDGRVGLKQVDVGNQISSGDTTGIVVITQTHPIDLVFTLPESDIATVVQAQKAGKPLVVEAWDRTNSKKLSEGTLLSLDNQIDATTGTIKVKARFNNQDDALFPNQFVNARMLVDTEQNAVVIPTAALQMGNEGHFVWVLNSENKVSKHLVTPGIQDSQKVVIRAGISAGDRVVTDGIDRLTEGAKVEVVEAQSTTTPEEKATSREYAKKGARS.

Residues 1-21 (MKGSYKSRWVIVIVVVIAAIA) form the signal peptide. The segment covering 31–46 (DSQSAAPGATKQAQQS) has biased composition (polar residues). Disordered regions lie at residues 31-56 (DSQS…GMRA) and 391-415 (VEAQ…GARS). Residues 399-415 (PEEKATSREYAKKGARS) are compositionally biased toward basic and acidic residues.

Belongs to the membrane fusion protein (MFP) (TC 8.A.1) family. As to quaternary structure, part of a tripartite efflux system composed of MdtA, MdtB and MdtC.

Its subcellular location is the cell inner membrane. Functionally, the MdtABC tripartite complex confers resistance against novobiocin and deoxycholate. The chain is Multidrug resistance protein MdtA from Escherichia coli O45:K1 (strain S88 / ExPEC).